The following is a 158-amino-acid chain: Siroheme decarboxylase beta subunit (158 aa).

The protein belongs to the Ahb/Nir family. As to quaternary structure, forms a heterodimer composed of AhbA and AhbB.

It catalyses the reaction siroheme + 2 H(+) = 12,18-didecarboxysiroheme + 2 CO2. It functions in the pathway porphyrin-containing compound metabolism; protoheme biosynthesis. Its function is as follows. Involved in siroheme-dependent heme b biosynthesis. Catalyzes the decarboxylation of siroheme into didecarboxysiroheme. The sequence is that of Siroheme decarboxylase beta subunit from Oleidesulfovibrio alaskensis (strain ATCC BAA-1058 / DSM 17464 / G20) (Desulfovibrio alaskensis).